We begin with the raw amino-acid sequence, 216 residues long: MOB kinase activator-like 1 homolog B (216 aa).

Cysteine 79, cysteine 84, histidine 161, and histidine 166 together coordinate Zn(2+).

It belongs to the MOB1/phocein family.

This is MOB kinase activator-like 1 homolog B (mobB) from Dictyostelium discoideum (Social amoeba).